Here is a 315-residue protein sequence, read N- to C-terminus: NAD kinase (315 aa).

D91 acts as the Proton acceptor in catalysis. NAD(+) is bound by residues 91–92 (DG), R96, 165–166 (NE), D195, and 206–211 (TAYAFS).

Belongs to the NAD kinase family. A divalent metal cation serves as cofactor.

Its subcellular location is the cytoplasm. The catalysed reaction is NAD(+) + ATP = ADP + NADP(+) + H(+). Functionally, involved in the regulation of the intracellular balance of NAD and NADP, and is a key enzyme in the biosynthesis of NADP. Catalyzes specifically the phosphorylation on 2'-hydroxyl of the adenosine moiety of NAD to yield NADP. This Rhodococcus erythropolis (strain PR4 / NBRC 100887) protein is NAD kinase.